Reading from the N-terminus, the 337-residue chain is DNA-directed RNA polymerase subunit alpha (337 aa).

The segment at 1–233 (MVREEIAEST…DLFVPFLHAE (233 aa)) is alpha N-terminal domain (alpha-NTD). Residues 266 to 337 (GIPLKYIFID…FAVDLPKVLI (72 aa)) are alpha C-terminal domain (alpha-CTD).

This sequence belongs to the RNA polymerase alpha chain family. In terms of assembly, in plastids the minimal PEP RNA polymerase catalytic core is composed of four subunits: alpha, beta, beta', and beta''. When a (nuclear-encoded) sigma factor is associated with the core the holoenzyme is formed, which can initiate transcription.

It is found in the plastid. Its subcellular location is the chloroplast. It carries out the reaction RNA(n) + a ribonucleoside 5'-triphosphate = RNA(n+1) + diphosphate. Functionally, DNA-dependent RNA polymerase catalyzes the transcription of DNA into RNA using the four ribonucleoside triphosphates as substrates. The sequence is that of DNA-directed RNA polymerase subunit alpha from Dioscorea elephantipes (Elephant's foot yam).